The sequence spans 229 residues: Non-structural protein P8 (229 aa).

The CCM-I stretch occupies residues methionine 14–leucine 26. The segment at isoleucine 94–lysine 116 is CCM-III. 2 helical membrane-spanning segments follow: residues isoleucine 119–leucine 139 and serine 162–alanine 182. The interval glutamate 185–glutamate 198 is CCM-II.

It belongs to the orbivirus NS3 family. As to quaternary structure, forms homooligomers via coiled-coil motif. Interacts with host OPTN; this interaction inhibits innate immune response.

The protein localises to the host cell membrane. It localises to the host Golgi apparatus. Its function is as follows. Plays a role in the inhibition of host innate immune response. Interacts with host OPTN and thus inhibits the recruitment of TBK1 to the host Golgi apparatus. In turn, downstream partner IRF3 cannot be activated and IFN-beta production is impaired. Functionally, facilitates viral particle release either by increasing plasma membrane permeability through a viroporin-like activity or by viral budding. This chain is Non-structural protein P8 (Segment-10), found in Bluetongue virus 10 (isolate USA) (BTV 10).